The chain runs to 600 residues: Prostaglandin G/H synthase 1 (600 aa).

A signal peptide spans 1–24 (MSRQSISLRFPLLLLLLSPSPVFS). Positions 32–70 (PVNPCCYYPCQHQGICVRFGLDRYQCDCTRTGYSGPNCT) constitute an EGF-like domain. Cystine bridges form between Cys36-Cys47, Cys37-Cys159, Cys41-Cys57, and Cys59-Cys69. Asn68 carries an N-linked (GlcNAc...) asparagine glycan. The next 4 membrane-spanning stretches (helical) occupy residues 74-82 (IWTWLRTTL), 86-92 (PSFIHFL), 97-105 (RWLWDFVNA), and 108-122 (IRDT…VRSN). The N-linked (GlcNAc...) asparagine glycan is linked to Asn144. His207 acts as the Proton acceptor in catalysis. Tyr385 (for cyclooxygenase activity) is an active-site residue. Position 388 (His388) interacts with heme b. Asn410 is a glycosylation site (N-linked (GlcNAc...) asparagine). Cys569 and Cys575 are disulfide-bonded.

This sequence belongs to the prostaglandin G/H synthase family. In terms of assembly, homodimer. Heme b serves as cofactor.

The protein localises to the endoplasmic reticulum membrane. It localises to the microsome membrane. It catalyses the reaction (5Z,8Z,11Z,14Z)-eicosatetraenoate + AH2 + 2 O2 = prostaglandin H2 + A + H2O. It carries out the reaction (5Z,8Z,11Z,14Z)-eicosatetraenoate + 2 O2 = prostaglandin G2. The enzyme catalyses prostaglandin G2 + AH2 = prostaglandin H2 + A + H2O. The catalysed reaction is (9Z,12Z)-octadecadienoate + AH2 + O2 = (9R)-hydroxy-(10E,12Z)-octadecadienoate + A + H2O. It catalyses the reaction (9Z,12Z)-octadecadienoate + AH2 + O2 = (9S)-hydroxy-(10E,12Z)-octadecadienoate + A + H2O. It carries out the reaction (9Z,12Z)-octadecadienoate + AH2 + O2 = (13S)-hydroxy-(9Z,11E)-octadecadienoate + A + H2O. The enzyme catalyses (9Z,12Z)-octadecadienoate + AH2 + O2 = (13R)-hydroxy-(9Z,11E)-octadecadienoate + A + H2O. It participates in lipid metabolism; prostaglandin biosynthesis. Its activity is regulated as follows. The cyclooxygenase activity is inhibited by nonsteroidal anti-inflammatory drugs (NSAIDs) including ibuprofen, flurbiprofen, ketoprofen, naproxen, flurbiprofen, anirolac, fenclofenac and diclofenac. In terms of biological role, dual cyclooxygenase and peroxidase that plays an important role in the biosynthesis pathway of prostanoids, a class of C20 oxylipins mainly derived from arachidonate ((5Z,8Z,11Z,14Z)-eicosatetraenoate, AA, C20:4(n-6)), with a particular role in the inflammatory response. The cyclooxygenase activity oxygenates AA to the hydroperoxy endoperoxide prostaglandin G2 (PGG2), and the peroxidase activity reduces PGG2 to the hydroxy endoperoxide prostaglandin H2 (PGH2), the precursor of all 2-series prostaglandins and thromboxanes. This complex transformation is initiated by abstraction of hydrogen at carbon 13 (with S-stereochemistry), followed by insertion of molecular O2 to form the endoperoxide bridge between carbon 9 and 11 that defines prostaglandins. The insertion of a second molecule of O2 (bis-oxygenase activity) yields a hydroperoxy group in PGG2 that is then reduced to PGH2 by two electrons. Involved in the constitutive production of prostanoids in particular in the stomach and platelets. In gastric epithelial cells, it is a key step in the generation of prostaglandins, such as prostaglandin E2 (PGE2), which plays an important role in cytoprotection. In platelets, it is involved in the generation of thromboxane A2 (TXA2), which promotes platelet activation and aggregation, vasoconstriction and proliferation of vascular smooth muscle cells. Can also use linoleate (LA, (9Z,12Z)-octadecadienoate, C18:2(n-6)) as substrate and produce hydroxyoctadecadienoates (HODEs) in a regio- and stereospecific manner, being (9R)-HODE ((9R)-hydroxy-(10E,12Z)-octadecadienoate) and (13S)-HODE ((13S)-hydroxy-(9Z,11E)-octadecadienoate) its major products. This chain is Prostaglandin G/H synthase 1 (PTGS1), found in Ovis aries (Sheep).